A 770-amino-acid chain; its full sequence is Semaphorin-4F (770 aa).

An N-terminal signal peptide occupies residues 1-34 (MPASAARPRPGPGQPTASPFPLLLLAVLSGPVSG). The Extracellular segment spans residues 35 to 659 (RVPRSVPRTS…RDAPSRAHTV (625 aa)). Residues 42–510 (RTSLPISEAD…SRTEVTQVNT (469 aa)) enclose the Sema domain. Asn-64 is a glycosylation site (N-linked (GlcNAc...) asparagine). Cys-112 and Cys-122 are joined by a disulfide. A glycan (N-linked (GlcNAc...) asparagine) is linked at Asn-133. 3 disulfides stabilise this stretch: Cys-140–Cys-149, Cys-273–Cys-384, and Cys-297–Cys-343. N-linked (GlcNAc...) asparagine glycosylation is present at Asn-509. One can recognise a PSI domain in the interval 512 to 563 (NCGRLQSCSECILAQDPVCAWSFRLDECVAHAGEHRGLVQDIESADVSSLCP). 3 cysteine pairs are disulfide-bonded: Cys-513-Cys-530, Cys-522-Cys-539, and Cys-587-Cys-628. Positions 580 to 635 (AAHVVLPCSPSSAWASCVWHQPSGVTALTPRRDGLEVVVTPGAMGAYACECQEGGA) constitute an Ig-like C2-type domain. A helical transmembrane segment spans residues 660 to 680 (GAGLAGFFLGILAASLTLILI). At 681–770 (GRRQQRRRQR…PLATCDETSI (90 aa)) the chain is on the cytoplasmic side. Residues 696-725 (DKVGLDLGAPPSGTTSYSQDPPSPSPEDER) form a disordered region. A phosphoserine mark is found at Ser-718 and Ser-720. The short motif at 768–770 (TSI) is the PDZ-binding element.

The protein belongs to the semaphorin family. Interacts (via PDZ-binding motif) with DLG4/SAP90 (via PDZ domain 2); this interaction may promote translocation of DLG4/SAP90 to the membrane.

The protein localises to the cell membrane. It is found in the postsynaptic density. The protein resides in the perikaryon. Its subcellular location is the cell projection. It localises to the dendrite. Functionally, probable cell surface receptor that regulates oligodendroglial precursor cell migration. Might also regulate differentiation of oligodendroglial precursor cells. Has growth cone collapse activity against retinal ganglion-cell axons. The polypeptide is Semaphorin-4F (SEMA4F) (Homo sapiens (Human)).